The primary structure comprises 67 residues: Phycobilisome 7.8 kDa linker polypeptide, allophycocyanin-associated, core (67 aa).

The CpcD-like domain occupies 1–56 (MRMFRITACLPSPSKIRTQRELQNTFFTKLVPYDAWFREQQRIQKLGGKIIKVELA).

This sequence belongs to the phycobilisome linker protein family.

Its subcellular location is the cellular thylakoid membrane. In terms of biological role, rod linker protein, associated with allophycocyanin. Linker polypeptides determine the state of aggregation and the location of the disk-shaped phycobiliprotein units within the phycobilisome and modulate their spectroscopic properties in order to mediate a directed and optimal energy transfer. This is Phycobilisome 7.8 kDa linker polypeptide, allophycocyanin-associated, core (apcC) from Synechococcus sp. (strain ATCC 27144 / PCC 6301 / SAUG 1402/1) (Anacystis nidulans).